A 134-amino-acid chain; its full sequence is Arsenate reductase (134 aa).

Catalysis depends on nucleophile residues Cys11, Cys83, and Cys90. 2 disulfides stabilise this stretch: Cys11/Cys83 and Cys83/Cys90.

It belongs to the low molecular weight phosphotyrosine protein phosphatase family. Thioredoxin-coupled ArsC subfamily.

It is found in the cytoplasm. It catalyses the reaction arsenate + [thioredoxin]-dithiol + H(+) = arsenite + [thioredoxin]-disulfide + H2O. Catalyzes the reduction of arsenate [As(V)] to arsenite [As(III)]. The sequence is that of Arsenate reductase from Bacillus anthracis (strain A0248).